The chain runs to 231 residues: MPLGYWGVMGNCFRRLSLFGQPTQANYEMLCSSDDLESEELTYFLDMTYKDFGVYQNDIISHQKDTETMKTLLGLLPMYKKTKLRHTIMERCLSNCPNHVKDALCVELMKAEKILQTMDVVFMKTLIGEFSMCTDNLNQLLNKFATDQSTLSDVEKINSLIEIDGENSKRLLVELDPILHEETGLYQALPNVVTEAPSEKVKSIHVESEGESVWSSVTEGGIMKQEKGTGV.

The S-palmitoyl cysteine; by host moiety is linked to residue Cys-12.

This sequence belongs to the herpesviridae UL51 family. As to quaternary structure, oligomerizes. Interacts with U75; this interaction mediates U75 incorporation to virions. Phosphorylated. In terms of processing, palmitoylation is necessary for Golgi localization.

The protein resides in the virion tegument. The protein localises to the host cytoplasm. Its subcellular location is the host Golgi apparatus. In terms of biological role, plays several roles during the time course of infection, including egress of virus particles from the perinuclear space and secondary envelopment of cytoplasmic capsids that bud into specific trans-Golgi network (TGN)-derived membranes. This Human herpesvirus 6B (strain Z29) (HHV-6 variant B) protein is Tegument protein UL51 homolog (U44).